We begin with the raw amino-acid sequence, 1152 residues long: Nardilysin (1152 aa).

The signal sequence occupies residues 1 to 20; sequence MLRKVTVAAVCATRRKLCEA. Disordered regions lie at residues 81 to 108 and 133 to 208; these read LGADESEEEGRRGSLSNAGDPEIVKSPS and MEGK…KKTT. A phosphoserine mark is found at Ser-86, Ser-94, and Ser-96. Residues 141-198 are compositionally biased toward acidic residues; that stretch reads TDDEEEEEVEEEEEDDDEDSGAEIEDDDEEGFDDEDEFDDEHDDDLDTEDNELEELEE. His-234 contributes to the Zn(2+) binding site. Residue Glu-237 is the Proton acceptor of the active site. Residues His-238 and Glu-315 each coordinate Zn(2+).

This sequence belongs to the peptidase M16 family. As to quaternary structure, interacts with BACE1 and NRG1. Zn(2+) serves as cofactor.

The protein localises to the mitochondrion. Its subcellular location is the cell projection. It localises to the dendrite. It catalyses the reaction Hydrolysis of polypeptides, preferably at -Xaa-|-Arg-Lys-, and less commonly at -Arg-|-Arg-Xaa-, in which Xaa is not Arg or Lys.. Cleaves peptide substrates on the N-terminus of arginine residues in dibasic pairs. Is a critical activator of BACE1- and ADAM17-mediated pro-neuregulin ectodomain shedding, involved in the positive regulation of axonal maturation and myelination. Required for proper functioning of 2-oxoglutarate dehydrogenase (OGDH). This chain is Nardilysin, found in Pongo abelii (Sumatran orangutan).